The chain runs to 450 residues: Glutamate-1-semialdehyde 2,1-aminomutase (450 aa).

Lys262 carries the post-translational modification N6-(pyridoxal phosphate)lysine.

This sequence belongs to the class-III pyridoxal-phosphate-dependent aminotransferase family. HemL subfamily. As to quaternary structure, homodimer. Requires pyridoxal 5'-phosphate as cofactor.

It is found in the cytoplasm. It catalyses the reaction (S)-4-amino-5-oxopentanoate = 5-aminolevulinate. The protein operates within porphyrin-containing compound metabolism; protoporphyrin-IX biosynthesis; 5-aminolevulinate from L-glutamyl-tRNA(Glu): step 2/2. This Campylobacter hominis (strain ATCC BAA-381 / DSM 21671 / CCUG 45161 / LMG 19568 / NCTC 13146 / CH001A) protein is Glutamate-1-semialdehyde 2,1-aminomutase.